The following is a 484-amino-acid chain: Sorting assembly machinery 50 kDa subunit (484 aa).

It belongs to the SAM50/omp85 family. Component of the mitochondrial outer membrane sorting assembly machinery (SAM or TOB) complex, which at least consists of SAM35, SAM37 and SAM50. Associates with the mitochondrial contact site and cristae organizing system (MICOS) complex (also known as MINOS or MitOS complex).

It localises to the mitochondrion outer membrane. Component of the mitochondrial outer membrane sorting assembly machinery (SAM or TOB) complex, which is required for the sorting of proteins with complicated topology, such as beta-barrel proteins, to the mitochondrial outer membrane after import by the TOM complex. This Saccharomyces cerevisiae (strain ATCC 204508 / S288c) (Baker's yeast) protein is Sorting assembly machinery 50 kDa subunit (SAM50).